A 170-amino-acid polypeptide reads, in one-letter code: Probable chemoreceptor glutamine deamidase CheD (170 aa).

This sequence belongs to the CheD family.

It carries out the reaction L-glutaminyl-[protein] + H2O = L-glutamyl-[protein] + NH4(+). Its function is as follows. Probably deamidates glutamine residues to glutamate on methyl-accepting chemotaxis receptors (MCPs), playing an important role in chemotaxis. The chain is Probable chemoreceptor glutamine deamidase CheD from Maridesulfovibrio salexigens (strain ATCC 14822 / DSM 2638 / NCIMB 8403 / VKM B-1763) (Desulfovibrio salexigens).